Reading from the N-terminus, the 663-residue chain is 4-hydroxy-3-methylbut-2-en-1-yl diphosphate synthase (flavodoxin) (663 aa).

Positions 568, 571, 602, and 609 each coordinate [4Fe-4S] cluster.

The protein belongs to the IspG family. The cofactor is [4Fe-4S] cluster.

The catalysed reaction is (2E)-4-hydroxy-3-methylbut-2-enyl diphosphate + oxidized [flavodoxin] + H2O + 2 H(+) = 2-C-methyl-D-erythritol 2,4-cyclic diphosphate + reduced [flavodoxin]. Its pathway is isoprenoid biosynthesis; isopentenyl diphosphate biosynthesis via DXP pathway; isopentenyl diphosphate from 1-deoxy-D-xylulose 5-phosphate: step 5/6. In terms of biological role, converts 2C-methyl-D-erythritol 2,4-cyclodiphosphate (ME-2,4cPP) into 1-hydroxy-2-methyl-2-(E)-butenyl 4-diphosphate. This Leptospira borgpetersenii serovar Hardjo-bovis (strain L550) protein is 4-hydroxy-3-methylbut-2-en-1-yl diphosphate synthase (flavodoxin).